The sequence spans 928 residues: MTSTTMVTTLDLVTPTSEEQPGPAPESSDFSTVVLSPDGSELVTQSAPNTPIQHREQANAEFGQKEGSPDPKNMVAATGNASKPSLNSFYADGLGQLRNGLFSCFQPVFGYFGTKTTVEIEKSEDELWEIPFDAISELEWLGSGSQGAVFRGQLENRTVAVKKVNQLKETEIKHLRHLRHQNIIEFLGVCSKSPCYCIVMEYCSKGQLCTVLKSRNTITRELFAQWVKEIADGMHYLHQNKVIHRDLKSPNILISAEDSIKICDFGTSHMQKKMDSTMMSFCGTVSWMAPEMIKKQPCNEKVDVYSFGVVLWEMLTRETPYANIAQMAIIFGVGTNILSLPMPEEAPKGLVLLIKQCLSQKGRNRPSFSHIRQHWEIFKPELFEMTEEEWQLAWDSYREFAKCIQYPSTVTRDHGGPKSAFAMEEEIQRKRHEQLNHIKDIRNMYEMKLKRTNKMYDKLQGCFTELKLKESELAEWEKDLTEREQWHNQNSPKAVAAPRAQLRGYPNEGYDDMSSDEDVQPCRGSPYRCSNTSSSSGVQSSPFSRQSSSRSSAGQQTRRSEGANPPKILRNDAIRHSGSYWETLGGARGSPARDSGFSQDSGMWSAGAGSCTAINGGGQQVCYSQTLYRNGDGRWSDGRIASRRRVSTSVNKSTAVPGQPVFFTRDSPSRVPHGVISCSSPRSSSKLNRSSYPSRNAPHQLEDGCCCAHARAPRAKSIAVPMTSSSRARSPTPYDNDFENAESFVDPESPKNLKNLEKIVNLPESTSYDEALCNSDVTMNPIYTSPITTYSNPCHVELVDEENANDVDLTSSMDSRRSRSDDADVESSEEDEGNGNNILNTSMESEDLRYRIDTSQSTMMSSLERSLEIGATRSDGLSDNEMRVQAVKMSIKTHRRTGSNPQALIHQCIDEYTTSATDDSDDAGAVRI.

Residues 1 to 72 (MTSTTMVTTL…GQKEGSPDPK (72 aa)) are disordered. Positions 42 to 52 (LVTQSAPNTPI) are enriched in polar residues. The segment covering 53-69 (QHREQANAEFGQKEGSP) has biased composition (basic and acidic residues). The Protein kinase domain occupies 135-377 (ISELEWLGSG…FSHIRQHWEI (243 aa)). ATP contacts are provided by residues 141–149 (LGSGSQGAV) and lysine 162. Catalysis depends on aspartate 246, which acts as the Proton acceptor. The leucine-zipper stretch occupies residues 459 to 480 (LQGCFTELKLKESELAEWEKDL). Disordered regions lie at residues 483–575 (REQW…DAIR), 644–696 (RRVS…PSRN), and 802–845 (ENAN…SMES). Over residues 509-519 (GYDDMSSDEDV) the composition is skewed to acidic residues. Residues 530–557 (SNTSSSSGVQSSPFSRQSSSRSSAGQQT) show a composition bias toward low complexity. Positions 605–814 (SAGAGSCTAI…NDVDLTSSMD (210 aa)) are important for interaction between isoform a and isoform c. Polar residues predominate over residues 647-656 (STSVNKSTAV). A compositionally biased stretch (low complexity) spans 677-695 (SCSSPRSSSKLNRSSYPSR). A compositionally biased stretch (acidic residues) spans 823–833 (ADVESSEEDEG). Serine 874 and serine 878 each carry phosphoserine. The SDGLSD hexapeptide signature appears at 874–879 (SDGLSD).

It belongs to the protein kinase superfamily. STE Ser/Thr protein kinase family. MAP kinase kinase kinase subfamily. As to quaternary structure, homooligomer (via leucine zipper domain and hexapeptide motif). Isoform a (via leucine zipper domain) forms a heterooligomer with isoform c (via leucine zipper domain). Isoform c does not self-associate. Mg(2+) serves as cofactor. Post-translationally, ubiquitinated by rpm-1. Negatively regulated by ubiquitination by fsn-1 bound rpm-1, followed by degradation. In terms of processing, phosphorylation at Ser-874 and/or at Ser-878 abolishes interaction with isoform c and promotes binding to isoform a kinase domain (likely in trans) resulting in isoform a self-association and activation. As to expression, expressed in nerve ring, nerve cord, neurons, and pharynx.

The protein localises to the synapse. Its subcellular location is the cytoplasm. It is found in the cell projection. It localises to the axon. The protein resides in the dendrite. The protein localises to the cilium. It catalyses the reaction L-seryl-[protein] + ATP = O-phospho-L-seryl-[protein] + ADP + H(+). The enzyme catalyses L-threonyl-[protein] + ATP = O-phospho-L-threonyl-[protein] + ADP + H(+). Inactive when associated with isoform c. Dissociation from isoform c, which is dependent on the phosphorylation of the C-terminal hexapeptide, results in self-association and activation. Transient increase in Ca(2+) levels caused by axonal injury or synaptic activity triggers the dissociation of isoform a from isoform c; the dissociation may be influenced by the phosphorylation status of the C-terminal hexapeptide. Its function is as follows. Component of a MAP kinase pathway that functions presynaptically to regulate synaptic architecture and presynaptic differentiation. Phosphorylates and activates mkk-4. Has a role in axonal regrowth following injury and synaptogenesis. Plays a role in modulating polymerization of neuronal microtubules. Also promotes tubulin post-translational modifications that protect microtubules. Plays a role in cilium length regulation, possibly by reducing rab-5 mediated endocytosis, and may also have a role in intraflagellar transport in cilia. Plays a role in the formation of muscle connections, also called muscle arm extensions, between the body wall and the motor axons in the dorsal and ventral cord. In terms of biological role, has a role in synapse and axon development, and in axonal regrowth following injury. By forming heterooligomers with isoform a, acts as an inhibitor of isoform a activation. Its inhibitory function is independent of its catalytic activity. In Caenorhabditis elegans, this protein is Mitogen-activated protein kinase kinase kinase dlk-1 (dlk-1).